The primary structure comprises 446 residues: 3-phosphoshikimate 1-carboxyvinyltransferase (446 aa).

Lys-27, Ser-28, and Arg-32 together coordinate 3-phosphoshikimate. Lys-27 provides a ligand contact to phosphoenolpyruvate. Phosphoenolpyruvate is bound by residues Gly-100 and Arg-128. 3-phosphoshikimate-binding residues include Ser-177, Gln-179, Asp-330, and Lys-357. Gln-179 provides a ligand contact to phosphoenolpyruvate. Asp-330 functions as the Proton acceptor in the catalytic mechanism. Residues Arg-361 and Arg-406 each coordinate phosphoenolpyruvate.

The protein belongs to the EPSP synthase family. Monomer.

It is found in the cytoplasm. It carries out the reaction 3-phosphoshikimate + phosphoenolpyruvate = 5-O-(1-carboxyvinyl)-3-phosphoshikimate + phosphate. Its pathway is metabolic intermediate biosynthesis; chorismate biosynthesis; chorismate from D-erythrose 4-phosphate and phosphoenolpyruvate: step 6/7. Functionally, catalyzes the transfer of the enolpyruvyl moiety of phosphoenolpyruvate (PEP) to the 5-hydroxyl of shikimate-3-phosphate (S3P) to produce enolpyruvyl shikimate-3-phosphate and inorganic phosphate. This is 3-phosphoshikimate 1-carboxyvinyltransferase from Sphingopyxis alaskensis (strain DSM 13593 / LMG 18877 / RB2256) (Sphingomonas alaskensis).